Reading from the N-terminus, the 101-residue chain is uncharacterized protein (101 aa).

Residues 1-19 (MKFKYLSTPLLFSALLFSA) form the signal peptide. C20 carries the N-palmitoyl cysteine lipid modification. C20 carries the S-diacylglycerol cysteine lipid modification.

This sequence belongs to the MG439/MG440 family.

It localises to the cell membrane. This is an uncharacterized protein from Mycoplasma pneumoniae (strain ATCC 29342 / M129 / Subtype 1) (Mycoplasmoides pneumoniae).